The following is a 494-amino-acid chain: UDP-N-acetylmuramoyl-L-alanyl-D-glutamate--2,6-diaminopimelate ligase (494 aa).

Ser30 provides a ligand contact to UDP-N-acetyl-alpha-D-muramoyl-L-alanyl-D-glutamate. 110–116 is an ATP binding site; that stretch reads GTNGKTS. UDP-N-acetyl-alpha-D-muramoyl-L-alanyl-D-glutamate is bound by residues 152–153, Ser179, and Arg187; that span reads TT. N6-carboxylysine is present on Lys219. Residues Arg380, 404–407, Gly456, and Glu460 contribute to the meso-2,6-diaminopimelate site; that span reads DNPR. Residues 404 to 407 carry the Meso-diaminopimelate recognition motif motif; it reads DNPR.

The protein belongs to the MurCDEF family. MurE subfamily. Mg(2+) serves as cofactor. Carboxylation is probably crucial for Mg(2+) binding and, consequently, for the gamma-phosphate positioning of ATP.

Its subcellular location is the cytoplasm. It catalyses the reaction UDP-N-acetyl-alpha-D-muramoyl-L-alanyl-D-glutamate + meso-2,6-diaminopimelate + ATP = UDP-N-acetyl-alpha-D-muramoyl-L-alanyl-gamma-D-glutamyl-meso-2,6-diaminopimelate + ADP + phosphate + H(+). It functions in the pathway cell wall biogenesis; peptidoglycan biosynthesis. Catalyzes the addition of meso-diaminopimelic acid to the nucleotide precursor UDP-N-acetylmuramoyl-L-alanyl-D-glutamate (UMAG) in the biosynthesis of bacterial cell-wall peptidoglycan. This chain is UDP-N-acetylmuramoyl-L-alanyl-D-glutamate--2,6-diaminopimelate ligase, found in Alkaliphilus metalliredigens (strain QYMF).